Here is a 515-residue protein sequence, read N- to C-terminus: MDEFHRCGKEDSFWQQCFLYPLFFKEDLYAISHDHYLDVSSSSRPMEHLSSNDQLSFLTVKRLIGQIRQQNHSIVLFVNCDPNPLADRKKSFYSESVLEALTLVLEVPFSIWSKYSVEGMNESKSFRSIHSIFPFLEDKFPHSNSILDARIPYSIHPEILVRTFRRWIRDAPSLHPLRSVLYEYRNSTENLQRSIIVVPRVNTRFFLFLWNYYVCECESILFSRLKRSSHSRSLSHGSFPQRTHFHRKIKHIIIFSRRNSLKSIWSLKDPKIHYVRYGERPIIAIKGAHLLVKKCRYYLLIFRQFYFHLWSEPYRVCSHQLSKNCSSSPGYFLRVRMNPILVRTKMLDELFIADLITDEIDPIVPIVPIIGLLATEKFCDISGRPISKLSWTSLTDDDILDRFDQIWRNLFHYYSGSFDRDGLYRIKYILSLSCAKTLACKHKSTIRVVRKELGPELFKKSFSKEREFDSLPFSSKAAARSQRERIWHSDIPQINPLANSWQKIQDLKIGNLFDQ.

Belongs to the intron maturase 2 family. MatK subfamily.

Its subcellular location is the plastid. It is found in the chloroplast. Its function is as follows. Usually encoded in the trnK tRNA gene intron. Probably assists in splicing its own and other chloroplast group II introns. This chain is Maturase K, found in Pinus contorta (Shore pine).